A 572-amino-acid chain; its full sequence is Proline--tRNA ligase (572 aa).

This sequence belongs to the class-II aminoacyl-tRNA synthetase family. ProS type 1 subfamily. As to quaternary structure, homodimer.

Its subcellular location is the cytoplasm. The enzyme catalyses tRNA(Pro) + L-proline + ATP = L-prolyl-tRNA(Pro) + AMP + diphosphate. Functionally, catalyzes the attachment of proline to tRNA(Pro) in a two-step reaction: proline is first activated by ATP to form Pro-AMP and then transferred to the acceptor end of tRNA(Pro). As ProRS can inadvertently accommodate and process non-cognate amino acids such as alanine and cysteine, to avoid such errors it has two additional distinct editing activities against alanine. One activity is designated as 'pretransfer' editing and involves the tRNA(Pro)-independent hydrolysis of activated Ala-AMP. The other activity is designated 'posttransfer' editing and involves deacylation of mischarged Ala-tRNA(Pro). The misacylated Cys-tRNA(Pro) is not edited by ProRS. The protein is Proline--tRNA ligase of Cronobacter sakazakii (strain ATCC BAA-894) (Enterobacter sakazakii).